The chain runs to 393 residues: HORMA domain-containing protein 1 (393 aa).

The region spanning 24–226 (QQSLVLVKRL…TPFHTFKVKV (203 aa)) is the HORMA domain. The tract at residues 322-393 (SKTSELDVSE…RKFSEPKERI (72 aa)) is disordered. Over residues 352 to 361 (KSKENRKRTQ) the composition is skewed to basic and acidic residues. At serine 375 the chain carries Phosphoserine. The Nuclear localization signal motif lies at 382-385 (KRRK).

In terms of assembly, interacts with HORMAD2. Interacts with IHO1. In terms of processing, phosphorylated at Ser-376 in a SPO11-dependent manner.

The protein resides in the nucleus. It is found in the chromosome. In terms of biological role, plays a key role in meiotic progression. Regulates 3 different functions during meiosis: ensures that sufficient numbers of processed DNA double-strand breaks (DSBs) are available for successful homology search by increasing the steady-state numbers of single-stranded DSB ends. Promotes synaptonemal-complex formation independently of its role in homology search. Plays a key role in the male mid-pachytene checkpoint and the female meiotic prophase checkpoint: required for efficient build-up of ATR activity on unsynapsed chromosome regions, a process believed to form the basis of meiotic silencing of unsynapsed chromatin (MSUC) and meiotic prophase quality control in both sexes. The polypeptide is HORMA domain-containing protein 1 (HORMAD1) (Bos taurus (Bovine)).